A 471-amino-acid chain; its full sequence is GTPase Der (471 aa).

2 EngA-type G domains span residues 5-168 (PVIA…TDLE) and 186-359 (IRVA…DSAF). Residues 11–18 (GRPNVGKS), 58–62 (DTGGI), 120–123 (NKTD), 192–199 (GRPNVGKS), 239–243 (DTAGV), and 304–307 (NKWD) contribute to the GTP site. In terms of domain architecture, KH-like spans 360–444 (IKIGTNELTR…PIRLEFKSGT (85 aa)).

The protein belongs to the TRAFAC class TrmE-Era-EngA-EngB-Septin-like GTPase superfamily. EngA (Der) GTPase family. In terms of assembly, associates with the 50S ribosomal subunit.

Its function is as follows. GTPase that plays an essential role in the late steps of ribosome biogenesis. The sequence is that of GTPase Der from Alcanivorax borkumensis (strain ATCC 700651 / DSM 11573 / NCIMB 13689 / SK2).